Reading from the N-terminus, the 259-residue chain is LKTTPLTLRSPFLHRLPLRALKTHKPTSLHISKSSISASLEAGVGVMATKLGMMSFFEESGTVVPVTVVGFREGNIVTQIKTEATDGYNAVQVGYRRVRDRKLTKPEMGHLEKSGIIPLRHLQEFRLQSIDGFEVTQKLDFGELFKEGDLVDVSGTTIGKGFQGGIKRHNFKRGQMTHGSKSHRQLGSIGAGTTPGRVYKGKKMPGRMGGTKRKIRKLKIVKIDDQLNIIMIKGALPGKPGNLLRIAPAKIVGKNIPKS.

The transit peptide at 1–37 (LKTTPLTLRSPFLHRLPLRALKTHKPTSLHISKSSIS) directs the protein to the chloroplast. A disordered region spans residues 176-211 (MTHGSKSHRQLGSIGAGTTPGRVYKGKKMPGRMGGT). The segment covering 199-211 (YKGKKMPGRMGGT) has biased composition (basic residues).

It belongs to the universal ribosomal protein uL3 family. As to quaternary structure, part of the 50S ribosomal subunit.

Its subcellular location is the plastid. It is found in the chloroplast. Functionally, one of the primary rRNA binding proteins, it binds directly near the 3'-end of the 23S rRNA, where it nucleates assembly of the 50S subunit. In Nicotiana tabacum (Common tobacco), this protein is Large ribosomal subunit protein uL3c (RPL3).